Reading from the N-terminus, the 300-residue chain is 17-beta-hydroxysteroid dehydrogenase 13 (300 aa).

A signal peptide spans 1 to 19 (MNIILEILLLLITIIYSYL). Phosphoserine is present on Ser33. 40–67 (LITGAGHGIGRQTTYEFAKRQSILVLWD) is an NAD(+) binding site. A substrate-binding site is contributed by Ser172. Tyr185 acts as the Proton acceptor in catalysis. An NAD(+)-binding site is contributed by Lys189.

The protein belongs to the short-chain dehydrogenases/reductases (SDR) family. Highly expressed in the liver. Also detected in ovary, bone marrow, kidney, brain, lung, skeletal muscle, bladder and testis.

The protein localises to the lipid droplet. It is found in the endoplasmic reticulum. It localises to the cytoplasm. The enzyme catalyses 17beta-estradiol + NAD(+) = estrone + NADH + H(+). It carries out the reaction all-trans-retinol + NAD(+) = all-trans-retinal + NADH + H(+). The catalysed reaction is all-trans-retinal + NAD(+) + H2O = all-trans-retinoate + NADH + 2 H(+). Functionally, plays a pivotal role in hepatic lipid metabolism. In vitro, it catalyzes the oxidation of a variety of lipid substrates, including 17beta-estradiol, retinol, retinal, and leukotriene B4. Has retinol/retinal dehydrogenase activity in vitro. In terms of biological role, does not have retinol/retinal dehydrogenase activity in vitro. The chain is 17-beta-hydroxysteroid dehydrogenase 13 from Homo sapiens (Human).